We begin with the raw amino-acid sequence, 206 residues long: SITELCKTLSAGPLDPNTEVVVGCPAPYLSLARSLLPETIGVAAQNCYKVAKGAFTGEISPAMLKDLGLGWVILGHSERRAIFGETDELIAEKVAHALGEGLKVIACIGETLQEREAGQTEAVCFRQTKAIAAQVKDWSNVVIAYEPVWAIGTGKTATPEQAQEVHAALRKWFTENVSADVSNAIRIQYGGSVTAANCRELAGKPD.

Residue histidine 76 is the Electrophile of the active site. Glutamate 146 functions as the Proton acceptor in the catalytic mechanism.

This sequence belongs to the triosephosphate isomerase family. As to quaternary structure, homodimer.

It catalyses the reaction D-glyceraldehyde 3-phosphate = dihydroxyacetone phosphate. It participates in carbohydrate biosynthesis; gluconeogenesis. The protein operates within carbohydrate degradation; glycolysis; D-glyceraldehyde 3-phosphate from glycerone phosphate: step 1/1. The protein is Triosephosphate isomerase (Tpi) of Anopheles merus (Mosquito).